Reading from the N-terminus, the 248-residue chain is ATP synthase subunit a (248 aa).

Residues 1–3 (MLY) constitute a propeptide, removed in mature form. A run of 7 helical transmembrane segments spans residues 24–44 (MSLT…FFIF), 86–106 (IYMP…LVGL), 117–137 (FALP…IGFV), 146–166 (VLLP…VELL), 183–203 (ITSG…TSGI), 205–225 (LLFV…ELIV), and 227–247 (ILQA…SLIL).

This sequence belongs to the ATPase A chain family. As to quaternary structure, F-type ATPases have 2 components, CF(1) - the catalytic core - and CF(0) - the membrane proton channel. CF(1) has five subunits: alpha(3), beta(3), gamma(1), delta(1), epsilon(1). CF(0) has three main subunits: a, b and c.

It is found in the mitochondrion inner membrane. In terms of biological role, mitochondrial membrane ATP synthase (F(1)F(0) ATP synthase or Complex V) produces ATP from ADP in the presence of a proton gradient across the membrane which is generated by electron transport complexes of the respiratory chain. F-type ATPases consist of two structural domains, F(1) - containing the extramembraneous catalytic core and F(0) - containing the membrane proton channel, linked together by a central stalk and a peripheral stalk. During catalysis, ATP synthesis in the catalytic domain of F(1) is coupled via a rotary mechanism of the central stalk subunits to proton translocation. Key component of the proton channel; it may play a direct role in the translocation of protons across the membrane. The polypeptide is ATP synthase subunit a (Zancudomyces culisetae (Gut fungus)).